We begin with the raw amino-acid sequence, 365 residues long: Cobalt-precorrin-5B C(1)-methyltransferase (365 aa).

The protein belongs to the CbiD family.

It catalyses the reaction Co-precorrin-5B + S-adenosyl-L-methionine = Co-precorrin-6A + S-adenosyl-L-homocysteine. It participates in cofactor biosynthesis; adenosylcobalamin biosynthesis; cob(II)yrinate a,c-diamide from sirohydrochlorin (anaerobic route): step 6/10. Its function is as follows. Catalyzes the methylation of C-1 in cobalt-precorrin-5B to form cobalt-precorrin-6A. The sequence is that of Cobalt-precorrin-5B C(1)-methyltransferase from Pseudomonas fluorescens (strain ATCC BAA-477 / NRRL B-23932 / Pf-5).